A 119-amino-acid chain; its full sequence is Holo-[acyl-carrier-protein] synthase (119 aa).

Mg(2+)-binding residues include D8 and E58.

The protein belongs to the P-Pant transferase superfamily. AcpS family. It depends on Mg(2+) as a cofactor.

It localises to the cytoplasm. The catalysed reaction is apo-[ACP] + CoA = holo-[ACP] + adenosine 3',5'-bisphosphate + H(+). Its function is as follows. Transfers the 4'-phosphopantetheine moiety from coenzyme A to a Ser of acyl-carrier-protein. This chain is Holo-[acyl-carrier-protein] synthase, found in Bacillus cytotoxicus (strain DSM 22905 / CIP 110041 / 391-98 / NVH 391-98).